Here is a 452-residue protein sequence, read N- to C-terminus: Protein disulfide-isomerase TMX3 (452 aa).

The signal sequence occupies residues 1–26 (MAAAGLCFILAIVSSTSLLASVPVSA). Positions 27-128 (LVEDLDDSFK…KEDIVEFANR (102 aa)) constitute a Thioredoxin domain. The Lumenal segment spans residues 27–375 (LVEDLDDSFK…TVVSVFKSSP (349 aa)). Active-site nucleophile residues include Cys-53 and Cys-56. The cysteines at positions 53 and 56 are disulfide-linked. Asn-258 and Asn-313 each carry an N-linked (GlcNAc...) asparagine glycan. Residues 376 to 396 (LLGCFLFGLPLGVISIMCYGI) form a helical membrane-spanning segment. The Cytoplasmic portion of the chain corresponds to 397 to 452 (CTADTEDGSEEMTRKDVIDQNASDEGSDEEEEKGREITDVSDEDQQEKDFMEKKID). The interval 405–452 (SEEMTRKDVIDQNASDEGSDEEEEKGREITDVSDEDQQEKDFMEKKID) is disordered. Basic and acidic residues predominate over residues 443–452 (EKDFMEKKID). The Di-lysine motif motif lies at 449-452 (KKID).

The protein belongs to the protein disulfide isomerase family.

It is found in the endoplasmic reticulum membrane. The catalysed reaction is Catalyzes the rearrangement of -S-S- bonds in proteins.. Probable disulfide isomerase, which participates in the folding of proteins containing disulfide bonds. May act as a dithiol oxidase. Acts as a regulator of endoplasmic reticulum-mitochondria contact sites via its ability to regulate redox signals. In Xenopus laevis (African clawed frog), this protein is Protein disulfide-isomerase TMX3 (tmx3).